The chain runs to 1136 residues: Phytochrome (1136 aa).

Positions 1 to 28 (MSTTRPRAATHSASSGSVSRSSKHSARV) are disordered. Residues 11-20 (HSASSGSVSR) show a composition bias toward low complexity. In terms of domain architecture, GAF spans 231-414 (DIRLLCDTVV…VFGIQLNKEV (184 aa)). Cys-336 serves as a coordination point for phytochromobilin. 2 PAS domains span residues 629–699 (VTNE…LQGE) and 762–833 (DYRA…TKLR). The region spanning 913 to 1132 (YIRQEIRNPL…IINVEFPLAQ (220 aa)) is the Histidine kinase domain.

Belongs to the phytochrome family. Homodimer. Contains one covalently linked phytochromobilin chromophore.

In terms of biological role, regulatory photoreceptor which exists in two forms that are reversibly interconvertible by light: the Pr form that absorbs maximally in the red region of the spectrum and the Pfr form that absorbs maximally in the far-red region. Photoconversion of Pr to Pfr induces an array of morphogenic responses, whereas reconversion of Pfr to Pr cancels the induction of those responses. Pfr controls the expression of a number of nuclear genes including those encoding the small subunit of ribulose-bisphosphate carboxylase, chlorophyll A/B binding protein, protochlorophyllide reductase, rRNA, etc. It also controls the expression of its own gene(s) in a negative feedback fashion. This Picea abies (Norway spruce) protein is Phytochrome.